A 477-amino-acid polypeptide reads, in one-letter code: V-type ATP synthase beta chain (477 aa).

It belongs to the ATPase alpha/beta chains family.

Functionally, produces ATP from ADP in the presence of a proton gradient across the membrane. The V-type beta chain is a regulatory subunit. The protein is V-type ATP synthase beta chain of Anaeromyxobacter dehalogenans (strain 2CP-1 / ATCC BAA-258).